Here is a 138-residue protein sequence, read N- to C-terminus: Small ribosomal subunit protein uS11c (138 aa).

Residues 1–23 (MAKAIPRVGSRKNGRISSRKSAR) form a disordered region. Positions 9–23 (GSRKNGRISSRKSAR) are enriched in basic residues.

Belongs to the universal ribosomal protein uS11 family. As to quaternary structure, part of the 30S ribosomal subunit.

It is found in the plastid. The protein localises to the chloroplast. The sequence is that of Small ribosomal subunit protein uS11c from Coffea arabica (Arabian coffee).